We begin with the raw amino-acid sequence, 228 residues long: DNA-3-methyladenine glycosylase 1 (228 aa).

Residue Asp-170 is the Proton acceptor of the active site.

This sequence belongs to the alkylbase DNA glycosidase AlkA family.

It carries out the reaction Hydrolysis of alkylated DNA, releasing 3-methyladenine, 3-methylguanine, 7-methylguanine and 7-methyladenine.. Its function is as follows. Hydrolysis of the deoxyribose N-glycosidic bond to excise 3-methyladenine or 7-methyladenine from the damaged DNA polymer formed by alkylation lesions. Can release ethylated and propylated bases from DNA in addition to 3-methyladenine. The polypeptide is DNA-3-methyladenine glycosylase 1 (mag1) (Schizosaccharomyces pombe (strain 972 / ATCC 24843) (Fission yeast)).